The sequence spans 219 residues: Charged multivesicular body protein 5 (219 aa).

Residues 1-10 (MNRFFGKAKP) show a composition bias toward basic residues. The tract at residues 1-21 (MNRFFGKAKPKAPPPSLTDCI) is disordered. The stretch at 26-179 (SRAESIDKKI…LGDELLADED (154 aa)) forms a coiled coil. A Phosphoserine modification is found at S86. Residues 188–219 (SAPAIPEGVPTDTKNKDGVLVDEFGLPQIPAS) are disordered.

It belongs to the SNF7 family. As to quaternary structure, probable peripherally associated component of the endosomal sorting required for transport complex III (ESCRT-III). ESCRT-III components are thought to multimerize to form a flat lattice on the perimeter membrane of the endosome. Several assembly forms of ESCRT-III may exist that interact and act sequentially. Interacts with VTA1. Interacts with CHMP2A. Interacts with VTA1; the interaction involves soluble CHMP5. Interacts with NOD2. Interacts with BROX. Post-translationally, ISGylated. Isgylation inhibits its interaction with VTA1.

It is found in the cytoplasm. The protein resides in the cytosol. The protein localises to the endosome membrane. Its subcellular location is the midbody. In terms of biological role, probable peripherally associated component of the endosomal sorting required for transport complex III (ESCRT-III) which is involved in multivesicular bodies (MVBs) formation and sorting of endosomal cargo proteins into MVBs. MVBs contain intraluminal vesicles (ILVs) that are generated by invagination and scission from the limiting membrane of the endosome and mostly are delivered to lysosomes enabling degradation of membrane proteins, such as stimulated growth factor receptors, lysosomal enzymes and lipids. The MVB pathway appears to require the sequential function of ESCRT-O, -I,-II and -III complexes. ESCRT-III proteins mostly dissociate from the invaginating membrane before the ILV is released. The ESCRT machinery also functions in topologically equivalent membrane fission events, such as the terminal stages of cytokinesis. ESCRT-III proteins are believed to mediate the necessary vesicle extrusion and/or membrane fission activities, possibly in conjunction with the AAA ATPase VPS4. This chain is Charged multivesicular body protein 5 (Chmp5), found in Mus musculus (Mouse).